A 384-amino-acid chain; its full sequence is MSKQRVVVGMSGGVDSSVTAWLLKEQGYDVVGLFMKNWEDDDDSEYCSTRQDWIDVVSVADLIGIDVEAVNFAAEYKDRVFAEFLREYSAGRTPNPDVLCNAEIKFKAFLDHAMSLGAETIATGHYARVREIDGRFELLKARDHTKDQSYFLHRLNQAQLSKTLFPLGDIPKTKVREIAEQIGLPNAKKKDSTGICFIGERPFRDFLNRYLPTRPGPMKTTDGKTVGEHIGLAFYTFGQRKGIGLGGSKDGSGEPWFVAGKDIESNTLYVAQGHDHPWLLSRTLTAGNTSWVAGHAPEVGHACAAKTRYRQADAACTFGAAGANADPNALFSLHFADAQWAVTPGQSAVLYDGDVCLGGGIIEHAATAQPVTRQPQKAALLTAR.

ATP contacts are provided by residues 9 to 16 (GMSGGVDS) and Met-35. Residues 95-97 (NPD) are interaction with target base in tRNA. The active-site Nucleophile is Cys-100. Cys-100 and Cys-196 are joined by a disulfide. Gly-124 is an ATP binding site. Residues 146–148 (KDQ) are interaction with tRNA. Residue Cys-196 is the Cysteine persulfide intermediate of the active site. An interaction with tRNA region spans residues 308–309 (RY).

Belongs to the MnmA/TRMU family.

Its subcellular location is the cytoplasm. The catalysed reaction is S-sulfanyl-L-cysteinyl-[protein] + uridine(34) in tRNA + AH2 + ATP = 2-thiouridine(34) in tRNA + L-cysteinyl-[protein] + A + AMP + diphosphate + H(+). Functionally, catalyzes the 2-thiolation of uridine at the wobble position (U34) of tRNA, leading to the formation of s(2)U34. This Paraburkholderia phymatum (strain DSM 17167 / CIP 108236 / LMG 21445 / STM815) (Burkholderia phymatum) protein is tRNA-specific 2-thiouridylase MnmA.